A 350-amino-acid chain; its full sequence is Eukaryotic translation initiation factor 3 subunit I (350 aa).

WD repeat units lie at residues 8–49 (GHER…GTLE), 51–89 (HQGV…CVYT), 91–135 (NSPS…ASLT), 149–190 (QNGS…KSLQ), 198–240 (EKNV…KVYK), and 296–335 (GHFG…KDFL).

It belongs to the eIF-3 subunit I family. As to quaternary structure, component of the eukaryotic translation initiation factor 3 (eIF-3) complex.

The protein localises to the cytoplasm. Functionally, component of the eukaryotic translation initiation factor 3 (eIF-3) complex, which is involved in protein synthesis of a specialized repertoire of mRNAs and, together with other initiation factors, stimulates binding of mRNA and methionyl-tRNAi to the 40S ribosome. The eIF-3 complex specifically targets and initiates translation of a subset of mRNAs involved in cell proliferation. This is Eukaryotic translation initiation factor 3 subunit I from Lodderomyces elongisporus (strain ATCC 11503 / CBS 2605 / JCM 1781 / NBRC 1676 / NRRL YB-4239) (Yeast).